The chain runs to 89 residues: Large ribosomal subunit protein bL27 (89 aa).

The interval 1–20 (MAHKKAGGSSRNGRDSAGRR) is disordered.

It belongs to the bacterial ribosomal protein bL27 family.

This chain is Large ribosomal subunit protein bL27, found in Zymomonas mobilis subsp. mobilis (strain ATCC 31821 / ZM4 / CP4).